The primary structure comprises 104 residues: Small ribosomal subunit protein bS6 (104 aa).

It belongs to the bacterial ribosomal protein bS6 family.

In terms of biological role, binds together with bS18 to 16S ribosomal RNA. The chain is Small ribosomal subunit protein bS6 from Elusimicrobium minutum (strain Pei191).